A 91-amino-acid polypeptide reads, in one-letter code: Alpha-defensin-related sequence 12 (91 aa).

An N-terminal signal peptide occupies residues 1–19; sequence MKKLVLLSAFVLLAFQVQA. A propeptide spanning residues 20–65 is cleaved from the precursor; it reads DSIQNTDEEIKTEEQPGEENQAVSISFGDPEGYALQDAAIRRARRC. Tandem repeats lie at residues 65–67, 68–70, 71–73, 74–76, 77–79, and 83–85. The segment at 65-88 is 6 X 3 AA tandem repeats of C-P-X; it reads CPPCPSCLSCPWCPRCLRCPMCKC.

Belongs to the alpha-defensin family. As to expression, paneth cells of the small bowel.

The protein localises to the secreted. Functionally, apparent precursor of a secreted, cationic, proline- and cysteine-rich peptide that contains Cys-Pro-Xaa repeats. Unlike cryptdin, the proposed mature peptide region lacks the structural motif characteristic of defensins. It may have microbicidal activities. The polypeptide is Alpha-defensin-related sequence 12 (Defa-rs12) (Mus musculus (Mouse)).